The sequence spans 359 residues: Type-1 angiotensin II receptor (359 aa).

Residues 1–25 (MILNSSTEDGIKRIQDDCPKAGRHN) are Extracellular-facing. N-linked (GlcNAc...) asparagine glycosylation is present at asparagine 4. 2 residues coordinate angiotensin II: glutamine 15 and aspartate 17. Disulfide bonds link cysteine 18/cysteine 274 and cysteine 101/cysteine 180. Residues 26–55 (YIFVMIPTLYSIIFVVGIFGNSLVVIVIYF) form a helical membrane-spanning segment. The Cytoplasmic segment spans residues 56 to 61 (YMKLKT). A helical transmembrane segment spans residues 62–89 (VASVFLLNLALADLCFLLTLPLWAVYTA). The Extracellular portion of the chain corresponds to 90–98 (MEYRWPFGN). A helical transmembrane segment spans residues 99 to 125 (YLCKIASASVSFNLYASVFLLTCLSID). Over 126–141 (RYVAIVHPMKSPVRRT) the chain is Cytoplasmic. A helical transmembrane segment spans residues 142-165 (MLMAKVTCIIIWLLAGLASLPTII). The Extracellular portion of the chain corresponds to 166–190 (HRNVFFIENTNITVCAFHYESQNST). An angiotensin II-binding site is contributed by arginine 167. N-linked (GlcNAc...) asparagine glycosylation occurs at asparagine 176. Angiotensin II contacts are provided by phenylalanine 182, histidine 183, and tyrosine 184. A glycan (N-linked (GlcNAc...) asparagine) is linked at asparagine 188. The chain crosses the membrane as a helical span at residues 191-216 (LPIGLGLTKNILGFLFPFLIILTSYT). Lysine 199 contacts angiotensin II. Residues 217 to 239 (LIWKTLKRAYEIQKNKPRNDDIF) lie on the Cytoplasmic side of the membrane. Residues 240-268 (KIIMAIVLFFFFSWVPHQIFTFLDVLIQL) form a helical membrane-spanning segment. The Extracellular segment spans residues 269–278 (GIIHDCKIAD). Residues 279–304 (IVDTAMPITICIAYFNNCLNPLFYGF) traverse the membrane as a helical segment. The Cytoplasmic portion of the chain corresponds to 305–359 (LGKKFKKYFLQLLKYIPPKAKSHSSLSTKMSTLSYRPSDHGNASTKKSASCVEVE). Polar residues predominate over residues 335-352 (STLSYRPSDHGNASTKKS). The interval 335–359 (STLSYRPSDHGNASTKKSASCVEVE) is disordered. A lipid anchor (S-palmitoyl cysteine) is attached at cysteine 355.

Belongs to the G-protein coupled receptor 1 family. Interacts with MAS1. Interacts with ARRB1. Interacts with FLNA (via filamin repeat 21); increases PKA-mediated phosphorylation of FLNA. C-terminal Ser or Thr residues may be phosphorylated. In terms of tissue distribution, adrenal, liver, aorta, kidney, lung, testis and heart.

Its subcellular location is the cell membrane. Functionally, receptor for angiotensin II, a vasoconstricting peptide, which acts as a key regulator of blood pressure and sodium retention by the kidney. The activated receptor in turn couples to G-alpha proteins G(q) (GNAQ, GNA11, GNA14 or GNA15) and thus activates phospholipase C and increases the cytosolic Ca(2+) concentrations, which in turn triggers cellular responses such as stimulation of protein kinase C. The protein is Type-1 angiotensin II receptor (AGTR1) of Canis lupus familiaris (Dog).